A 160-amino-acid chain; its full sequence is MKKLAIMAAASMVFAVSSAHAGFTPSGTTGTTKLTVTEECQVRVGDLTVAKTRGQLTDAAPIGPVTVQALGCNARQVALKADTDNFEQGKFFLISDNNRDKLYVNIRPMDNSAWTTDNGVFYKNDVGSWGGTIGIYVDGQQTNTPPGNYTLTLTGGYWAK.

Residues 1-21 (MKKLAIMAAASMVFAVSSAHA) form the signal peptide. The tract at residues 22–75 (GFTPSGTTGTTKLTVTEECQVRVGDLTVAKTRGQLTDAAPIGPVTVQALGCNAR) is receptor-binding.

Belongs to the Dr-adhesin family.

It localises to the fimbrium. In terms of biological role, hemagglutinins of uropathogenic E.coli mediate adherence to the upper urinary tract. These adhesins bind to the Dr blood group antigen and also agglutinate human erythrocytes in the presence of D-mannose (mannose-resistant hemagglutination (MRHA)). This is Afimbrial adhesin AFA-III (afaE3) from Escherichia coli.